A 128-amino-acid chain; its full sequence is 3-aminoacrylate deaminase RutC (128 aa).

It belongs to the RutC family.

The enzyme catalyses (Z)-3-aminoacrylate + H2O + H(+) = 3-oxopropanoate + NH4(+). Involved in pyrimidine catabolism. Catalyzes the deamination of 3-aminoacrylate to malonic semialdehyde, a reaction that can also occur spontaneously. RutC may facilitate the reaction and modulate the metabolic fitness, rather than catalyzing essential functions. The protein is 3-aminoacrylate deaminase RutC of Enterobacter sp. (strain 638).